Consider the following 243-residue polypeptide: Sarcospan (243 aa).

A disordered region spans residues Met-1 to Glu-43. Residues Met-1–Pro-53 are Cytoplasmic-facing. Residues Pro-7–Pro-24 show a composition bias toward low complexity. A helical membrane pass occupies residues Leu-54 to Met-74. Residues Ala-75 to Thr-86 are Extracellular-facing. A helical membrane pass occupies residues Pro-87–Val-107. Topologically, residues Ser-108 to Lys-122 are cytoplasmic. The chain crosses the membrane as a helical span at residues Leu-123 to Ala-143. The Extracellular portion of the chain corresponds to Ala-144–Leu-193. Residues Phe-194 to Phe-214 traverse the membrane as a helical segment. At Val-215 to Ile-243 the chain is on the cytoplasmic side.

In terms of tissue distribution, isoform 1 is expressed exclusively in heart and skeletal muscle. Isoform 2 is expressed in heart, skeletal muscle, thymus, prostate, testis, ovary, small intestine, colon and spleen.

The protein localises to the cell membrane. The protein resides in the sarcolemma. It localises to the postsynaptic cell membrane. Its function is as follows. Component of the dystrophin-glycoprotein complex (DGC), a complex that spans the muscle plasma membrane and forms a link between the F-actin cytoskeleton and the extracellular matrix. Preferentially associates with the sarcoglycan subcomplex of the DGC. The chain is Sarcospan (SSPN) from Homo sapiens (Human).